Reading from the N-terminus, the 249-residue chain is Diaminopimelate epimerase (249 aa).

Substrate contacts are provided by Asn11 and Asn60. Residue Cys69 is the Proton donor of the active site. Substrate contacts are provided by residues 70–71 (GN), Asn164, and 182–183 (ER). The Proton acceptor role is filled by Cys192. 193-194 (GT) contributes to the substrate binding site.

This sequence belongs to the diaminopimelate epimerase family. As to quaternary structure, homodimer.

It localises to the cytoplasm. It catalyses the reaction (2S,6S)-2,6-diaminopimelate = meso-2,6-diaminopimelate. Its pathway is amino-acid biosynthesis; L-lysine biosynthesis via DAP pathway; DL-2,6-diaminopimelate from LL-2,6-diaminopimelate: step 1/1. Its function is as follows. Catalyzes the stereoinversion of LL-2,6-diaminopimelate (L,L-DAP) to meso-diaminopimelate (meso-DAP), a precursor of L-lysine and an essential component of the bacterial peptidoglycan. This is Diaminopimelate epimerase from Campylobacter lari (strain RM2100 / D67 / ATCC BAA-1060).